The sequence spans 227 residues: Pro-thyrotropin-releasing hormone-A (227 aa).

Positions 1-15 are cleaved as a signal peptide; sequence MVSVWWLLLLGTTVS. Pyrrolidone carboxylic acid is present on glutamine 75. Proline amide is present on proline 77. Pyrrolidone carboxylic acid is present on glutamine 89. At proline 91 the chain carries Proline amide. At glutamine 107 the chain carries Pyrrolidone carboxylic acid. Disordered stretches follow at residues 107-128 and 151-204; these read QHPG…KREE and RRQH…PCEG. Position 109 is a proline amide (proline 109). Residues 112-128 show a composition bias toward basic and acidic residues; the sequence is RFVDDVEKRQHPGKREE. Glutamine 121 is subject to Pyrrolidone carboxylic acid. The residue at position 123 (proline 123) is a Proline amide. Pyrrolidone carboxylic acid is present on glutamine 153. Proline 155 bears the Proline amide mark. Residue glutamine 168 is modified to Pyrrolidone carboxylic acid. Proline 170 is subject to Proline amide. Over residues 184-201 the composition is skewed to basic and acidic residues; it reads ENSKEVGKRQHPGKRYDP. Pyrrolidone carboxylic acid is present on glutamine 193. Proline 195 carries the post-translational modification Proline amide.

The protein belongs to the TRH family.

It is found in the secreted. This is Pro-thyrotropin-releasing hormone-A (trh-a) from Xenopus laevis (African clawed frog).